A 115-amino-acid chain; its full sequence is Phosphoribosyl-AMP cyclohydrolase (115 aa).

Asp80 is a Mg(2+) binding site. Zn(2+) is bound at residue Cys81. 2 residues coordinate Mg(2+): Asp82 and Asp84. Residues Cys97 and Cys104 each contribute to the Zn(2+) site.

This sequence belongs to the PRA-CH family. As to quaternary structure, homodimer. Requires Mg(2+) as cofactor. The cofactor is Zn(2+).

The protein resides in the cytoplasm. The enzyme catalyses 1-(5-phospho-beta-D-ribosyl)-5'-AMP + H2O = 1-(5-phospho-beta-D-ribosyl)-5-[(5-phospho-beta-D-ribosylamino)methylideneamino]imidazole-4-carboxamide. It functions in the pathway amino-acid biosynthesis; L-histidine biosynthesis; L-histidine from 5-phospho-alpha-D-ribose 1-diphosphate: step 3/9. Its function is as follows. Catalyzes the hydrolysis of the adenine ring of phosphoribosyl-AMP. This chain is Phosphoribosyl-AMP cyclohydrolase, found in Nocardia farcinica (strain IFM 10152).